The primary structure comprises 342 residues: S-adenosylmethionine:tRNA ribosyltransferase-isomerase (342 aa).

This sequence belongs to the QueA family. In terms of assembly, monomer.

It is found in the cytoplasm. It carries out the reaction 7-aminomethyl-7-carbaguanosine(34) in tRNA + S-adenosyl-L-methionine = epoxyqueuosine(34) in tRNA + adenine + L-methionine + 2 H(+). It functions in the pathway tRNA modification; tRNA-queuosine biosynthesis. In terms of biological role, transfers and isomerizes the ribose moiety from AdoMet to the 7-aminomethyl group of 7-deazaguanine (preQ1-tRNA) to give epoxyqueuosine (oQ-tRNA). The polypeptide is S-adenosylmethionine:tRNA ribosyltransferase-isomerase (Streptococcus pyogenes serotype M1).